A 126-amino-acid polypeptide reads, in one-letter code: Urease subunit beta (126 aa).

The protein belongs to the urease beta subunit family. Heterotrimer of UreA (gamma), UreB (beta) and UreC (alpha) subunits. Three heterotrimers associate to form the active enzyme.

Its subcellular location is the cytoplasm. It carries out the reaction urea + 2 H2O + H(+) = hydrogencarbonate + 2 NH4(+). It functions in the pathway nitrogen metabolism; urea degradation; CO(2) and NH(3) from urea (urease route): step 1/1. The chain is Urease subunit beta from Frankia casuarinae (strain DSM 45818 / CECT 9043 / HFP020203 / CcI3).